Consider the following 252-residue polypeptide: Ribosomal RNA small subunit methyltransferase J (252 aa).

Residues 105–106, 121–122, and aspartate 175 each bind S-adenosyl-L-methionine; these read RD and ER.

The protein belongs to the methyltransferase superfamily. RsmJ family.

Its subcellular location is the cytoplasm. It carries out the reaction guanosine(1516) in 16S rRNA + S-adenosyl-L-methionine = N(2)-methylguanosine(1516) in 16S rRNA + S-adenosyl-L-homocysteine + H(+). Its function is as follows. Specifically methylates the guanosine in position 1516 of 16S rRNA. The chain is Ribosomal RNA small subunit methyltransferase J from Pasteurella multocida (strain Pm70).